The following is a 113-amino-acid chain: Retrotransposon Gag-like protein 8A (113 aa).

This sequence belongs to the FAM127 family.

The chain is Retrotransposon Gag-like protein 8A from Homo sapiens (Human).